Reading from the N-terminus, the 188-residue chain is Elongation factor P-like protein (188 aa).

This sequence belongs to the elongation factor P family.

This is Elongation factor P-like protein from Xylella fastidiosa (strain 9a5c).